The chain runs to 299 residues: rRNA methyltransferase (299 aa).

Residues 14-53 (AEKRSGRGRMAAARTTGAQSRKTAQRSGRSEADRRRRVHG) form a disordered region. Positions 21–31 (GRMAAARTTGA) are enriched in low complexity. The S-adenosyl-L-methionine site is built by Asn55, Leu57, Gly82, Glu103, Asp128, and Asn144.

This sequence belongs to the class I-like SAM-binding methyltransferase superfamily. rRNA adenine N(6)-methyltransferase family.

Functionally, probable RNA methylase. Confers resistance to carbomycin and several other macrolides, lincomycin and vernamycin B, but not to all macrolide-lincosamide-streptogramin B antibiotics. The polypeptide is rRNA methyltransferase (carB) (Streptomyces thermotolerans).